A 341-amino-acid polypeptide reads, in one-letter code: UDP-3-O-acylglucosamine N-acyltransferase (341 aa).

His239 (proton acceptor) is an active-site residue.

This sequence belongs to the transferase hexapeptide repeat family. LpxD subfamily. As to quaternary structure, homotrimer.

It catalyses the reaction a UDP-3-O-[(3R)-3-hydroxyacyl]-alpha-D-glucosamine + a (3R)-hydroxyacyl-[ACP] = a UDP-2-N,3-O-bis[(3R)-3-hydroxyacyl]-alpha-D-glucosamine + holo-[ACP] + H(+). It functions in the pathway bacterial outer membrane biogenesis; LPS lipid A biosynthesis. Functionally, catalyzes the N-acylation of UDP-3-O-acylglucosamine using 3-hydroxyacyl-ACP as the acyl donor. Is involved in the biosynthesis of lipid A, a phosphorylated glycolipid that anchors the lipopolysaccharide to the outer membrane of the cell. The sequence is that of UDP-3-O-acylglucosamine N-acyltransferase from Shewanella sp. (strain MR-7).